A 551-amino-acid chain; its full sequence is Hydroxymethylpyrimidine/phosphomethylpyrimidine kinase THI21 (551 aa).

Glutamine 64 is a 4-amino-5-hydroxymethyl-2-methylpyrimidine binding site.

This sequence in the N-terminal section; belongs to the ThiD family. In the C-terminal section; belongs to the thiaminase-2 family.

The enzyme catalyses 4-amino-5-hydroxymethyl-2-methylpyrimidine + ATP = 4-amino-2-methyl-5-(phosphooxymethyl)pyrimidine + ADP + H(+). It catalyses the reaction 4-amino-2-methyl-5-(phosphooxymethyl)pyrimidine + ATP = 4-amino-2-methyl-5-(diphosphooxymethyl)pyrimidine + ADP. Its pathway is cofactor biosynthesis; thiamine diphosphate biosynthesis; 4-amino-2-methyl-5-diphosphomethylpyrimidine from 5-amino-1-(5-phospho-D-ribosyl)imidazole: step 2/3. The protein operates within cofactor biosynthesis; thiamine diphosphate biosynthesis; 4-amino-2-methyl-5-diphosphomethylpyrimidine from 5-amino-1-(5-phospho-D-ribosyl)imidazole: step 3/3. Its function is as follows. Catalyzes the phosphorylation of hydroxymethylpyrimidine phosphate (HMP-P) to HMP-PP, and also probably that of HMP to HMP-P. The sequence is that of Hydroxymethylpyrimidine/phosphomethylpyrimidine kinase THI21 (THI21) from Saccharomyces cerevisiae (strain ATCC 204508 / S288c) (Baker's yeast).